The primary structure comprises 673 residues: Potassium voltage-gated channel subfamily KQT member 1 (673 aa).

Disordered regions lie at residues 1–28 (MAAA…RGSA) and 61–80 (GPSS…LGPR). Residues 1–118 (MAAATSPPRA…YNFLERPTGW (118 aa)) are Cytoplasmic-facing. Ser27 carries the post-translational modification Phosphoserine. Low complexity predominate over residues 66–75 (AAPAASPAAA). The helical transmembrane segment at 119–140 (KCFVYHFAVFLIVLVCLIFSVL) threads the bilayer. Over 141–151 (STIEQYVALAT) the chain is Extracellular. The chain crosses the membrane as a helical span at residues 152 to 174 (GTLFWMEIVLVVFFGTEYAVRLW). At 175 to 190 (SAGCRSKYVGIWGRLR) the chain is on the cytoplasmic side. The helical transmembrane segment at 191–216 (FARKPISIIDLIVVVASMVVLCVGSK) threads the bilayer. Over 217–224 (GQVFATSA) the chain is Extracellular. Residues 225 to 240 (IRGIRFLQILRMLHVD) traverse the membrane as a helical; Voltage-sensor segment. An interaction with KCNE3 region spans residues 236–244 (MLHVDRQGG). Residues 241-258 (RQGGTWRLLGSVVFIHRQ) lie on the Cytoplasmic side of the membrane. Residue Gln242 participates in a 1,2-diacyl-sn-glycero-3-phospho-(1D-myo-inositol-4,5-bisphosphate) binding. A helical membrane pass occupies residues 259–281 (ELITTLYIGFLGLIFSSYFVYLA). The Extracellular segment spans residues 282 to 297 (EKDAVNESGQVEFGSY). Asn287 carries an N-linked (GlcNAc...) asparagine glycan. Residues 298–318 (ADALWWGVVTVTTIGYGDKVP) constitute an intramembrane region (pore-forming). The Extracellular portion of the chain corresponds to 319-320 (QT). Residues 321–346 (WVGKTIASCFSVFAISFFALPAGILG) form a helical membrane-spanning segment. Over 347–673 (SGFALKVQQK…VPGRGPEEGS (327 aa)) the chain is Cytoplasmic. Residues 368-380 (AAASLIQTAWRCY) form an interaction with CALM region. A phosphoserine mark is found at Ser405 and Ser407. An interaction with CALM; calcium-dependent region spans residues 514-528 (KVIRRMQYFVAKKKF). The segment at 534 to 571 (PYDVRDVIEQYSQGHLNLMVRIKELQRRLDQSIGRPAL) is interaction with KCNE1 C-terminus. The segment at 587-615 (IGARLNRVEDKVTQLDQRLELITDMLQQL) is interaction with AKAP9. The interval 588–619 (GARLNRVEDKVTQLDQRLELITDMLQQLLSLH) is C-terminal assembly domain (tetramerization). The segment at 619–673 (HRGGTPGSRAPGGGGAQVAQPCSGGSINPELFLPSNALPTYEQLTVPGRGPEEGS) is disordered. Positions 622–634 (GTPGSRAPGGGGA) are enriched in gly residues.

This sequence belongs to the potassium channel family. KQT (TC 1.A.1.15) subfamily. Kv7.1/KCNQ1 sub-subfamily. As to quaternary structure, tetramer. Heterotetramer with KCNE1; targets to the membrane raft. Interacts (via C-terminus) with CALM; forms a heterooctameric structure (with 4:4 KCNQ1:CALM stoichiometry) in a calcium-independent manner. Interacts with AKAP9; targets protein kinase A (PKA) catalytic and regulatory subunits and protein phosphatase 1 (PP1) to the KCNQ1-KCNE1 complex, allowing PKA-mediated phosphorylation and increase of delayed rectifier potassium channel activity. Interacts with KCNE2; form a heterooligomer complex that targets to the membrane raft and leading to currents with an apparently instantaneous activation, a rapid deactivation process and a linear current-voltage relationship and decreases the amplitude of the outward current. Interacts with AP2M1; mediates estrogen-induced internalization via clathrin-coated vesicles. Interacts with NEDD4L; promotes internalization and decreases I(Ks) currents. Interacts with USP2; counteracts the NEDD4L-specific down-regulation of I(Ks) and restore plasma membrane localization. Heterotetramer with KCNQ5; has a voltage-gated potassium channel activity. Interacts with KCNE3; four KCNE3 molecules are bound to one KCNQ1 tetramer (4:4 KCNQ1:KCNE3 stoichiometry); alters membrane raft localization; affects KCNQ1 structure and gating properties. Interacts with KCNE4; impairs KCNQ1 localization in lipid rafts and inhibits voltage-gated potassium channel activity. Interacts with KCNE5; impairs KCNQ1 localization in lipid rafts and only conducts current upon strong and continued depolarization. Interacts with SLC5A3; forms coregulatory channel-transporter complexes that modulate Na(+)-coupled myo-inositol influx through the transporter. Ubiquitinated by NEDD4L; promotes internalization. The ubiquitinylated form is internalized through a clathrin-mediated endocytosis by interacting with AP2M1 and is recycled back to the cell membrane via RAB4A and RAB11A. In terms of processing, deubiquitinated by USP2; counteracts the NEDD4L-specific down-regulation of I(Ks) and restores the membrane localization.

The protein resides in the cell membrane. It localises to the cytoplasmic vesicle membrane. The protein localises to the early endosome. Its subcellular location is the membrane raft. It is found in the endoplasmic reticulum. The protein resides in the basolateral cell membrane. It localises to the apical cell membrane. The catalysed reaction is K(+)(in) = K(+)(out). PIP2 molecule is essential to activate KCNQ channels by inducing the coupling of the voltage-sensing domain (VSD) and the pore-forming domain (PD). Upon channel activation, PIP2 disrupts the VSD-calmodulin/CALM interactions, causing the release of CALM from the VSD which triggers the opening of the gate. Calcium potentiates KCNQ1 channel current through calcium-bound CALM. Calcium-bound CALM competes with PIP2 to stabilize the channel open state. Its function is as follows. Pore-forming subunit of the voltage-gated potassium (Kv) channel involved in the regulation of cardiomyocyte excitability and important in normal development and functions of myocardium, inner ear, stomach and colon. Associates with KCNE beta subunits that modulates current kinetics. Induces a voltage-dependent by rapidly activating and slowly deactivating potassium-selective outward current. Also promotes a delayed voltage activated potassium current showing outward rectification characteristic. During beta-adrenergic receptor stimulation participates in cardiac repolarization by associating with KCNE1 to form the I(Ks) cardiac potassium current that increases the amplitude and slows down the activation kinetics of outward potassium current I(Ks). Muscarinic agonist oxotremorine-M strongly suppresses KCNQ1/KCNE1 current. When associated with KCNE3, forms the potassium channel that is important for cyclic AMP-stimulated intestinal secretion of chloride ions. This interaction with KCNE3 is reduced by 17beta-estradiol, resulting in the reduction of currents. During conditions of increased substrate load, maintains the driving force for proximal tubular and intestinal sodium ions absorption, gastric acid secretion, and cAMP-induced jejunal chloride ions secretion. Allows the provision of potassium ions to the luminal membrane of the secretory canaliculus in the resting state as well as during stimulated acid secretion. When associated with KCNE2, forms a heterooligomer complex leading to currents with an apparently instantaneous activation, a rapid deactivation process and a linear current-voltage relationship and decreases the amplitude of the outward current. When associated with KCNE4, inhibits voltage-gated potassium channel activity. When associated with KCNE5, this complex only conducts current upon strong and continued depolarization. Also forms a heterotetramer with KCNQ5 that has a voltage-gated potassium channel activity. Binds with phosphatidylinositol 4,5-bisphosphate. KCNQ1-KCNE2 channel associates with Na(+)-coupled myo-inositol symporter in the apical membrane of choroid plexus epithelium and regulates the myo-inositol gradient between blood and cerebrospinal fluid with an impact on neuron excitability. The polypeptide is Potassium voltage-gated channel subfamily KQT member 1 (Sus scrofa (Pig)).